The chain runs to 671 residues: DNA ligase (671 aa).

NAD(+)-binding positions include 34 to 38, 83 to 84, and Glu-113; these read DSEYD and SL. The active-site N6-AMP-lysine intermediate is the Lys-115. The NAD(+) site is built by Arg-136, Glu-170, Lys-286, and Lys-310. Cys-404, Cys-407, Cys-422, and Cys-427 together coordinate Zn(2+). The BRCT domain maps to 590–671; that stretch reads EEAGVFAGKT…FTQAVEQSEQ (82 aa).

Belongs to the NAD-dependent DNA ligase family. LigA subfamily. Mg(2+) is required as a cofactor. Mn(2+) serves as cofactor.

It catalyses the reaction NAD(+) + (deoxyribonucleotide)n-3'-hydroxyl + 5'-phospho-(deoxyribonucleotide)m = (deoxyribonucleotide)n+m + AMP + beta-nicotinamide D-nucleotide.. DNA ligase that catalyzes the formation of phosphodiester linkages between 5'-phosphoryl and 3'-hydroxyl groups in double-stranded DNA using NAD as a coenzyme and as the energy source for the reaction. It is essential for DNA replication and repair of damaged DNA. This is DNA ligase from Shouchella clausii (strain KSM-K16) (Alkalihalobacillus clausii).